Reading from the N-terminus, the 68-residue chain is UPF0434 protein H16_A0605 (68 aa).

Belongs to the UPF0434 family.

This is UPF0434 protein H16_A0605 from Cupriavidus necator (strain ATCC 17699 / DSM 428 / KCTC 22496 / NCIMB 10442 / H16 / Stanier 337) (Ralstonia eutropha).